The following is a 155-amino-acid chain: Small ribosomal subunit protein bS6 (155 aa).

Residues 94–155 (EKHEEGPSAM…RPRRPREDRV (62 aa)) form a disordered region.

Belongs to the bacterial ribosomal protein bS6 family.

Its function is as follows. Binds together with bS18 to 16S ribosomal RNA. In Rhizobium leguminosarum bv. trifolii (strain WSM2304), this protein is Small ribosomal subunit protein bS6.